Reading from the N-terminus, the 274-residue chain is Long chain fatty acid elongase 5 (274 aa).

At 1–23 the chain is on the extracellular side; sequence MMDQILGTNFTYEGAKEVARGLE. Residues 24-44 traverse the membrane as a helical segment; the sequence is GFSAKLAVGYIATIFGLKYYM. The Cytoplasmic segment spans residues 45–61; it reads KDRKAFDLSTPLNIWNG. A helical transmembrane segment spans residues 62–82; it reads ILSTFSLLGFLFTFPTLLSVI. Residues 83–105 lie on the Extracellular side of the membrane; it reads RKDGFSHTYSHVSELYTDSTSGY. The helical transmembrane segment at 106-126 threads the bilayer; the sequence is WIFLWVISKIPELLDTVFIVL. Topologically, residues 127–129 are cytoplasmic; that stretch reads RKR. A helical membrane pass occupies residues 130–150; it reads PLIFMHWYHHALTGYYALVCY. At 151-156 the chain is on the extracellular side; the sequence is HEDAVH. Residues 157 to 177 traverse the membrane as a helical segment; it reads MVWVVWMNYIIHAFMYGYYLL. Residues 178-187 are Cytoplasmic-facing; the sequence is KSLKVPIPPS. The helical transmembrane segment at 188–208 threads the bilayer; it reads VAQAITTSQMVQFAVAIFAQV. Residues 209-227 lie on the Extracellular side of the membrane; that stretch reads HVSYKHYVEGVEGLAYSFR. Residues 228-248 form a helical membrane-spanning segment; that stretch reads GTAIGFFMLTTYFYLWIQFYK. The Cytoplasmic portion of the chain corresponds to 249–274; it reads EHYLKNGGKKYNLAKDQAKTQTKKAN.

This sequence belongs to the ELO family. Expressed in the gut and unidentified head cells.

The protein localises to the membrane. It catalyses the reaction 11-methyldodecanoyl-CoA + malonyl-CoA + H(+) = 3-oxoisopentadecanoyl-CoA + CO2 + CoA. It carries out the reaction isopentadecanoyl-CoA + malonyl-CoA + H(+) = 3-oxoisoheptadecanoyl-CoA + CO2 + CoA. The protein operates within lipid metabolism; fatty acid biosynthesis. Functionally, catalyzes the first and rate-limiting reaction of the four reactions that constitute the long-chain fatty acids elongation cycle. Uses malonyl-CoA to add 2 carbons per cycle to the chain of long-chain fatty acids. Condensing enzyme required for the formation of isopentadecanoate (C15iso) and isoheptadecanoate (C17iso), both play critical roles in animal development and growth. This Caenorhabditis elegans protein is Long chain fatty acid elongase 5.